The following is a 487-amino-acid chain: E3 ubiquitin-protein ligase RNF8 (487 aa).

The region spanning 38–92 is the FHA domain; it reads VTIGRGFSVTYQLISKVCPLMISRNHCVLKQNPEGQWTIMDNKSLNGVWLNRERL. The interval 68–72 is required for interaction with PIWIL1; that stretch reads QNPEG. Positions 135–195 are disordered; the sequence is CLAPKNDHTT…PEKLHGKGEA (61 aa). At S157 the chain carries Phosphoserine. Positions 184–193 are enriched in basic and acidic residues; it reads AEPEKLHGKG. The segment at 405–443 adopts an RING-type zinc-finger fold; the sequence is CIICSEYFIEAVTLNCAHSFCSFCISEWMKRKVECPICR.

This sequence belongs to the RNF8 family. As to quaternary structure, homodimer. Forms a E2-E3 ubiquitin ligase complex composed of the RNF8 homodimer and a E2 heterodimer of UBE2N and UBE2V2. Interacts with class III E2s, including UBE2E1, UBE2E2, and UBE2E3 and with UBE2N. Interacts with RXRA. Interacts (via FHA domain) with phosphorylated HERC2 (via C-terminus). Interacts with PIWIL1; leading to sequester RNF8 in the cytoplasm. Interacts with WRAP53/TCAB1. Autoubiquitinated through 'Lys-48' and 'Lys-63' of ubiquitin. 'Lys-63' polyubiquitination is mediated by UBE2N. 'Lys-29'-type polyubiquitination is also observed, but it doesn't require its own functional RING-type zinc finger.

Its subcellular location is the nucleus. It is found in the cytoplasm. It localises to the midbody. The protein resides in the chromosome. The protein localises to the telomere. It carries out the reaction S-ubiquitinyl-[E2 ubiquitin-conjugating enzyme]-L-cysteine + [acceptor protein]-L-lysine = [E2 ubiquitin-conjugating enzyme]-L-cysteine + N(6)-ubiquitinyl-[acceptor protein]-L-lysine.. The protein operates within protein modification; protein ubiquitination. Functionally, E3 ubiquitin-protein ligase that plays a key role in DNA damage signaling via 2 distinct roles: by mediating the 'Lys-63'-linked ubiquitination of histones H2A and H2AX and promoting the recruitment of DNA repair proteins at double-strand breaks (DSBs) sites, and by catalyzing 'Lys-48'-linked ubiquitination to remove target proteins from DNA damage sites. Following DNA DSBs, it is recruited to the sites of damage by ATM-phosphorylated MDC1 and catalyzes the 'Lys-63'-linked ubiquitination of histones H2A and H2AX, thereby promoting the formation of TP53BP1 and BRCA1 ionizing radiation-induced foci (IRIF). Also controls the recruitment of UIMC1-BRCC3 (RAP80-BRCC36) and PAXIP1/PTIP to DNA damage sites. Promotes the recruitment of NBN to DNA damage sites by catalyzing 'Lys-6'-linked ubiquitination of NBN. Also recruited at DNA interstrand cross-links (ICLs) sites and catalyzes 'Lys-63'-linked ubiquitination of histones H2A and H2AX, leading to recruitment of FAAP20 and Fanconi anemia (FA) complex, followed by interstrand cross-link repair. H2A ubiquitination also mediates the ATM-dependent transcriptional silencing at regions flanking DSBs in cis, a mechanism to avoid collision between transcription and repair intermediates. Promotes the formation of 'Lys-63'-linked polyubiquitin chains via interactions with the specific ubiquitin-conjugating UBE2N/UBC13 and ubiquitinates non-histone substrates such as PCNA. Substrates that are polyubiquitinated at 'Lys-63' are usually not targeted for degradation. Also catalyzes the formation of 'Lys-48'-linked polyubiquitin chains via interaction with the ubiquitin-conjugating UBE2L6/UBCH8, leading to degradation of substrate proteins such as CHEK2, JMJD2A/KDM4A and KU80/XRCC5: it is still unclear how the preference toward 'Lys-48'- versus 'Lys-63'-linked ubiquitination is regulated but it could be due to RNF8 ability to interact with specific E2 specific ligases. For instance, interaction with phosphorylated HERC2 promotes the association between RNF8 and UBE2N/UBC13 and favors the specific formation of 'Lys-63'-linked ubiquitin chains. Promotes non-homologous end joining (NHEJ) by promoting the 'Lys-48'-linked ubiquitination and degradation the of KU80/XRCC5. Following DNA damage, mediates the ubiquitination and degradation of JMJD2A/KDM4A in collaboration with RNF168, leading to unmask H4K20me2 mark and promote the recruitment of TP53BP1 at DNA damage sites. Following DNA damage, mediates the ubiquitination and degradation of POLD4/p12, a subunit of DNA polymerase delta. In the absence of POLD4, DNA polymerase delta complex exhibits higher proofreading activity. In addition to its function in damage signaling, also plays a role in higher-order chromatin structure by mediating extensive chromatin decondensation. Involved in the activation of ATM by promoting histone H2B ubiquitination, which indirectly triggers histone H4 'Lys-16' acetylation (H4K16ac), establishing a chromatin environment that promotes efficient activation of ATM kinase. Required in the testis, where it plays a role in the replacement of histones during spermatogenesis. At uncapped telomeres, promotes the joining of deprotected chromosome ends by inducing H2A ubiquitination and TP53BP1 recruitment, suggesting that it may enhance cancer development by aggravating telomere-induced genome instability in case of telomeric crisis. Promotes the assembly of RAD51 at DNA DSBs in the absence of BRCA1 and TP53BP1 Also involved in class switch recombination in immune system, via its role in regulation of DSBs repair. May be required for proper exit from mitosis after spindle checkpoint activation and may regulate cytokinesis. May play a role in the regulation of RXRA-mediated transcriptional activity. Not involved in RXRA ubiquitination by UBE2E2. The sequence is that of E3 ubiquitin-protein ligase RNF8 from Rattus norvegicus (Rat).